The chain runs to 602 residues: Potassium voltage-gated channel subfamily A member 5 (602 aa).

The interval 1-107 is disordered; it reads MEISLVPMEN…EDQAPQDSGS (107 aa). A tetramerization domain region spans residues 1-202; that stretch reads MEISLVPMEN…FYQLGDEAME (202 aa). At 1–238 the chain is on the cytoplasmic side; the sequence is MEISLVPMEN…LIFEYPESSG (238 aa). A compositionally biased stretch (pro residues) spans 66–78; sequence PLPPMPQELPQPR. Phosphoserine; by CK2 and PKA is present on serine 81. A Glycyl lysine isopeptide (Lys-Gly) (interchain with G-Cter in SUMO) cross-link involves residue lysine 212. The helical transmembrane segment at 239–260 threads the bilayer; that stretch reads SARAIAIVSVLVILISIITFCL. Topologically, residues 261–314 are extracellular; it reads ETLPEFRDERELLRHPPVPPQPPAPAPGANGSGSGVLSSGPTVAPLLPRTLADP. The tract at residues 274-297 is disordered; the sequence is RHPPVPPQPPAPAPGANGSGSGVL. The segment covering 276–286 has biased composition (pro residues); it reads PPVPPQPPAPA. Asparagine 290 carries N-linked (GlcNAc...) asparagine glycosylation. A helical membrane pass occupies residues 315–336; it reads FFIVETTCVIWFTFELLVRFFA. A lipid anchor (S-palmitoyl cysteine) is attached at cysteine 337. Residues 337-347 lie on the Cytoplasmic side of the membrane; that stretch reads CPSKAEFSRNI. The helical transmembrane segment at 348 to 368 threads the bilayer; it reads MNIIDIVAIFPYFITLGTELA. Topologically, residues 369 to 384 are extracellular; it reads EQQPGGGGQNGQQAMS. The chain crosses the membrane as a helical; Voltage-sensor span at residues 385–405; that stretch reads LAILRVIRLVRVFRIFKLSRH. Residues 406-420 lie on the Cytoplasmic side of the membrane; that stretch reads SKGLQILGKTLQASM. The tract at residues 407–420 is S4-S5 linker; sequence KGLQILGKTLQASM. Residues 421–442 form a helical membrane-spanning segment; it reads RELGLLIFFLFIGVILFSSAVY. Residues 443–456 lie on the Extracellular side of the membrane; that stretch reads FAEADNQGSHFSSI. The helical intramembrane region spans 457-468; sequence PDAFWWAVVTMT. Residues 469-474 carry the Selectivity filter motif; the sequence is TVGYGD. Residues 469–476 lie within the membrane without spanning it; sequence TVGYGDMR. The Extracellular portion of the chain corresponds to 477-483; it reads PITVGGK. Residues 484-512 traverse the membrane as a helical segment; it reads IVGSLCAIAGVLTIALPVPVIVSNFNYFY. Residues 513-602 lie on the Cytoplasmic side of the membrane; that stretch reads HRETDHEEQA…CLDTSRETDL (90 aa). Residue lysine 525 forms a Glycyl lysine isopeptide (Lys-Gly) (interchain with G-Cter in SUMO) linkage. A phosphoserine; by PKA mark is found at serine 535, serine 546, and serine 569. The short motif at 600-602 is the PDZ-binding element; that stretch reads TDL.

It belongs to the potassium channel family. A (Shaker) (TC 1.A.1.2) subfamily. Kv1.5/KCNA5 sub-subfamily. As to quaternary structure, homotetramer and heterotetramer of potassium channel proteins. Interacts with DLG1, which enhances channel currents. Forms a ternary complex with DLG1 and CAV3. Interacts with KCNAB1. Interacts with UBE2I. Interacts with XIRP2; the interaction is required for normal action potential configuration in the heart. Glycosylated. In terms of processing, sumoylated on Lys-212, and Lys-525, preferentially with SUMO3. Sumoylation regulates the voltage sensitivity of the channel. In terms of tissue distribution, expressed in the heart (at protein level). Expressed in the brain and weakly expressed in the thymus, skeletal muscle and spleen.

It localises to the cell membrane. It catalyses the reaction K(+)(in) = K(+)(out). Its function is as follows. Voltage-gated potassium channel that mediates transmembrane potassium transport in excitable membranes. Forms tetrameric potassium-selective channels through which potassium ions pass in accordance with their electrochemical gradient. The channel alternates between opened and closed conformations in response to the voltage difference across the membrane. Can form functional homotetrameric channels and heterotetrameric channels that contain variable proportions of KCNA1, KCNA2, KCNA4, KCNA5, and possibly other family members as well; channel properties depend on the type of alpha subunits that are part of the channel. Channel properties are modulated by cytoplasmic beta subunits that regulate the subcellular location of the alpha subunits and promote rapid inactivation. Homotetrameric channels display rapid activation and slow inactivation. Required for normal electrical conduction including formation of the infranodal ventricular conduction system and normal action potential configuration, as a result of its interaction with XIRP2. May play a role in regulating the secretion of insulin in normal pancreatic islets. Functionally, voltage-gated potassium channel that mediates transmembrane potassium transport in excitable membranes. Forms tetrameric potassium-selective channels through which potassium ions pass in accordance with their electrochemical gradient. The channel alternates between opened and closed conformations in response to the voltage difference across the membrane. In terms of biological role, inactive. Inhibits expression of isoform 1 and isoform 2. This Mus musculus (Mouse) protein is Potassium voltage-gated channel subfamily A member 5 (Kcna5).